Here is an 812-residue protein sequence, read N- to C-terminus: ATP-dependent zinc metalloprotease FtsH (812 aa).

The Cytoplasmic portion of the chain corresponds to 1–21; the sequence is MPPSPPRPPKFPGSGRPESPN. The helical transmembrane segment at 22-42 threads the bilayer; it reads WGVWVMVLLIVGVLAFGFFTP. Topologically, residues 43-241 are extracellular; that stretch reads ESFGLGPRKE…TKFKRESGSW (199 aa). A helical membrane pass occupies residues 242-262; that stretch reads GGILLNLLPIVLILVILFFMF. Residues 263–812 are Cytoplasmic-facing; the sequence is RAQSGGARGA…EFGKDGGEKK (550 aa). 333–340 is an ATP binding site; it reads GAPGTGKT. His-555 provides a ligand contact to Zn(2+). The active site involves Glu-556. Positions 559 and 631 each coordinate Zn(2+). The disordered stretch occupies residues 739–812; sequence KNPPARVTPP…EFGKDGGEKK (74 aa). Composition is skewed to basic and acidic residues over residues 757 to 785 and 803 to 812; these read QPGK…RKME and EFGKDGGEKK.

In the central section; belongs to the AAA ATPase family. It in the C-terminal section; belongs to the peptidase M41 family. Homohexamer. Zn(2+) serves as cofactor.

The protein resides in the cell membrane. Functionally, acts as a processive, ATP-dependent zinc metallopeptidase for both cytoplasmic and membrane proteins. Plays a role in the quality control of integral membrane proteins. In Akkermansia muciniphila (strain ATCC BAA-835 / DSM 22959 / JCM 33894 / BCRC 81048 / CCUG 64013 / CIP 107961 / Muc), this protein is ATP-dependent zinc metalloprotease FtsH.